The sequence spans 577 residues: Glycine--tRNA ligase (577 aa).

Arginine 98 and glutamate 164 together coordinate substrate. ATP-binding positions include 196-198, 206-211, 328-329, and 451-454; these read RNE, IRLREF, EC, and GIDR. Substrate is bound at residue 211-215; the sequence is FTQAE. 447 to 451 provides a ligand contact to substrate; the sequence is EPSYG.

Belongs to the class-II aminoacyl-tRNA synthetase family.

The protein resides in the cytoplasm. It carries out the reaction tRNA(Gly) + glycine + ATP = glycyl-tRNA(Gly) + AMP + diphosphate. Functionally, catalyzes the attachment of glycine to tRNA(Gly). This chain is Glycine--tRNA ligase, found in Methanocaldococcus jannaschii (strain ATCC 43067 / DSM 2661 / JAL-1 / JCM 10045 / NBRC 100440) (Methanococcus jannaschii).